The primary structure comprises 189 residues: Molybdenum cofactor guanylyltransferase (189 aa).

Residues 12–14, Lys-24, Asp-68, and Asp-94 contribute to the GTP site; that span reads LAG. Asp-94 is a binding site for Mg(2+).

It belongs to the MobA family. In terms of assembly, monomer. Requires Mg(2+) as cofactor.

The protein localises to the cytoplasm. The enzyme catalyses Mo-molybdopterin + GTP + H(+) = Mo-molybdopterin guanine dinucleotide + diphosphate. In terms of biological role, transfers a GMP moiety from GTP to Mo-molybdopterin (Mo-MPT) cofactor (Moco or molybdenum cofactor) to form Mo-molybdopterin guanine dinucleotide (Mo-MGD) cofactor. The protein is Molybdenum cofactor guanylyltransferase of Xanthomonas euvesicatoria pv. vesicatoria (strain 85-10) (Xanthomonas campestris pv. vesicatoria).